The following is a 326-amino-acid chain: Nitrogen metabolite regulation-like protein bik4 (326 aa).

Residues 13–18 (GATGEV) and 161–164 (FASN) each bind NADP(+).

It belongs to the NmrA-type oxidoreductase family.

Its function is as follows. Nitrogen metabolite regulation-like protein involved in the regulation of the gene cluster that mediates the biosynthesis of bikaverin, a red pigment also considered as a mycotoxin. In Gibberella fujikuroi (strain CBS 195.34 / IMI 58289 / NRRL A-6831) (Bakanae and foot rot disease fungus), this protein is Nitrogen metabolite regulation-like protein bik4.